Reading from the N-terminus, the 991-residue chain is Pentatricopeptide repeat-containing protein At1g73710 (991 aa).

2 disordered regions span residues 1–27 and 61–81; these read MLQP…HHHH and SSSS…RKRK. Residues 15-27 are compositionally biased toward basic residues; sequence VRHHHHHHHHHHH. The segment covering 61-73 has biased composition (low complexity); it reads SSSSVSPPRCSKP. PPR repeat units follow at residues 144–178, 179–213, 214–248, 304–338, 339–373, 374–408, 409–443, 444–474, 478–513, 514–548, 549–583, 584–618, 619–653, 654–688, 689–719, 723–757, 758–792, 862–896, and 897–931; these read NVIH…GVLP, TNNT…MHFP, DEVT…KVDL, LTST…GVPI, DTVT…GISP, DTKT…GLFP, DTVT…SIRI, DEHS…FQLD, SSTT…GQRN, DVLE…GTWP, DECT…GCKP, GCKT…GVKP, NEVV…GVQS, NHIV…EGGP, DVAA…LREK, DVIS…GLLS, DCTS…RKLL, EHFA…GLEP, and DIVT…ELEP. Basic and acidic residues predominate over residues 965–974; that stretch reads AERECSSRSG. Residues 965 to 991 form a disordered region; sequence AERECSSRSGEEEEDDEEENSEEDEAF. Positions 975 to 991 are enriched in acidic residues; the sequence is EEEEDDEEENSEEDEAF.

It belongs to the PPR family. P subfamily.

This Arabidopsis thaliana (Mouse-ear cress) protein is Pentatricopeptide repeat-containing protein At1g73710.